A 204-amino-acid polypeptide reads, in one-letter code: uncharacterized protein (204 aa).

Disordered stretches follow at residues 1–37 and 159–204; these read MRAL…GSVS and GYRP…DGEL. The span at 28-37 shows a compositional bias: low complexity; sequence GRGPRAGSVS. Residues 88-175 enclose the WGR domain; sequence PYRLYVERLD…LPKEKWPAEA (88 aa). Composition is skewed to basic and acidic residues over residues 166-179 and 188-204; these read LPKE…EHES and PEGH…DGEL.

This is an uncharacterized protein from Sinorhizobium fredii (strain NBRC 101917 / NGR234).